The sequence spans 587 residues: Prolycopene isomerase 1, chloroplastic (587 aa).

Residues 1–13 (MLCLSLNSSSTSP) show a composition bias toward low complexity. The interval 1 to 21 (MLCLSLNSSSTSPPKSPLHHS) is disordered. A chloroplast-targeting transit peptide spans 1-50 (MLCLSLNSSSTSPPKSPLHHSFSRRSMRSWVCSPRVQRKKLGFWSSPKAV).

This sequence belongs to the carotenoid/retinoid oxidoreductase family. CrtISO subfamily. Requires NAD(+) as cofactor. NADP(+) serves as cofactor. It depends on FAD as a cofactor. As to expression, up-regulated in the flower buds and flower lip tissue, while it is weakly expressed in leaves.

It is found in the plastid. It localises to the chloroplast membrane. It carries out the reaction 7,7',9,9'-tetra-cis-lycopene = all-trans-lycopene. It functions in the pathway carotenoid biosynthesis; lycopene biosynthesis. Carotene cis-trans-isomerase that converts 7,9,9'-tri-cis-neurosporene to 9'-cis-neurosporene and 7,9,9',7'-tetra-cis-lycopene (also known as prolycopene) into all-trans-lycopene. Isomerization requires redox-active components, suggesting that isomerization is achieved by a reversible redox reaction acting at specific double bonds. Isomerizes adjacent cis-double bonds at C7 and C9 pairwise into the trans-configuration, but is incapable of isomerizing single cis-double bonds at C9 and C9'. This chain is Prolycopene isomerase 1, chloroplastic (CRTISO1), found in Oncidium hybrid cultivar (Orchid).